Reading from the N-terminus, the 354-residue chain is Probable L-ascorbate-6-phosphate lactonase UlaG (354 aa).

It belongs to the UlaG family. Requires a divalent metal cation as cofactor.

It localises to the cytoplasm. The enzyme catalyses L-ascorbate 6-phosphate + H2O = 3-dehydro-L-gulonate 6-phosphate. It functions in the pathway cofactor degradation; L-ascorbate degradation; D-xylulose 5-phosphate from L-ascorbate: step 1/4. Its function is as follows. Probably catalyzes the hydrolysis of L-ascorbate-6-P into 3-keto-L-gulonate-6-P. Is essential for L-ascorbate utilization under anaerobic conditions. The sequence is that of Probable L-ascorbate-6-phosphate lactonase UlaG from Escherichia coli O45:K1 (strain S88 / ExPEC).